A 279-amino-acid chain; its full sequence is 3-methyl-2-oxobutanoate hydroxymethyltransferase (279 aa).

Mg(2+) contacts are provided by aspartate 43 and aspartate 82. Residues 43 to 44 (DS), aspartate 82, and lysine 112 each bind 3-methyl-2-oxobutanoate. Mg(2+) is bound at residue glutamate 114. The active-site Proton acceptor is glutamate 181.

This sequence belongs to the PanB family. In terms of assembly, homodecamer; pentamer of dimers. It depends on Mg(2+) as a cofactor.

It localises to the cytoplasm. The catalysed reaction is 3-methyl-2-oxobutanoate + (6R)-5,10-methylene-5,6,7,8-tetrahydrofolate + H2O = 2-dehydropantoate + (6S)-5,6,7,8-tetrahydrofolate. It participates in cofactor biosynthesis; (R)-pantothenate biosynthesis; (R)-pantoate from 3-methyl-2-oxobutanoate: step 1/2. Functionally, catalyzes the reversible reaction in which hydroxymethyl group from 5,10-methylenetetrahydrofolate is transferred onto alpha-ketoisovalerate to form ketopantoate. The protein is 3-methyl-2-oxobutanoate hydroxymethyltransferase of Shouchella clausii (strain KSM-K16) (Alkalihalobacillus clausii).